Reading from the N-terminus, the 25-residue chain is Ranatuerin-1C (25 aa).

Cys-19 and Cys-25 are joined by a disulfide.

In terms of tissue distribution, expressed by the skin glands.

It localises to the secreted. Its function is as follows. Antibacterial activity against Gram-positive bacterium S.aureus (MIC=55 uM) and Gram-negative bacterium E.coli (MIC=1.5 uM). Has activity against C.albicans (MIC=58 uM). The chain is Ranatuerin-1C from Lithobates clamitans (Green frog).